The sequence spans 297 residues: 4-hydroxy-tetrahydrodipicolinate synthase (297 aa).

T55 provides a ligand contact to pyruvate. Residue Y144 is the Proton donor/acceptor of the active site. K172 functions as the Schiff-base intermediate with substrate in the catalytic mechanism. I213 lines the pyruvate pocket.

It belongs to the DapA family. As to quaternary structure, homotetramer; dimer of dimers.

The protein localises to the cytoplasm. The enzyme catalyses L-aspartate 4-semialdehyde + pyruvate = (2S,4S)-4-hydroxy-2,3,4,5-tetrahydrodipicolinate + H2O + H(+). Its pathway is amino-acid biosynthesis; L-lysine biosynthesis via DAP pathway; (S)-tetrahydrodipicolinate from L-aspartate: step 3/4. Catalyzes the condensation of (S)-aspartate-beta-semialdehyde [(S)-ASA] and pyruvate to 4-hydroxy-tetrahydrodipicolinate (HTPA). This is 4-hydroxy-tetrahydrodipicolinate synthase from Lactococcus lactis subsp. lactis (strain IL1403) (Streptococcus lactis).